The following is a 660-amino-acid chain: Bifunctional polymyxin resistance protein ArnA (660 aa).

Positions 1–304 are formyltransferase ArnAFT; it reads MKAVIFAYHD…TLGLVAGACL (304 aa). Catalysis depends on H104, which acts as the Proton donor; for formyltransferase activity. (6R)-10-formyltetrahydrofolate-binding positions include R114 and 136-140; that span reads VKRAD. Residues 314–660 are dehydrogenase ArnADH; that stretch reads RRIRVLILGV…RSVDIAERAS (347 aa). NAD(+) is bound by residues D347 and 368-369; that span reads DI. Residues A393, Y398, and 432–433 each bind UDP-alpha-D-glucuronate; that span reads TS. E434 acts as the Proton acceptor; for decarboxylase activity in catalysis. UDP-alpha-D-glucuronate-binding positions include R460, N492, 526–535, and Y613; that span reads KLIDGGQQKR. Catalysis depends on R619, which acts as the Proton donor; for decarboxylase activity.

It in the N-terminal section; belongs to the Fmt family. UDP-L-Ara4N formyltransferase subfamily. In the C-terminal section; belongs to the NAD(P)-dependent epimerase/dehydratase family. UDP-glucuronic acid decarboxylase subfamily. As to quaternary structure, homohexamer, formed by a dimer of trimers.

It carries out the reaction UDP-alpha-D-glucuronate + NAD(+) = UDP-beta-L-threo-pentopyranos-4-ulose + CO2 + NADH. It catalyses the reaction UDP-4-amino-4-deoxy-beta-L-arabinose + (6R)-10-formyltetrahydrofolate = UDP-4-deoxy-4-formamido-beta-L-arabinose + (6S)-5,6,7,8-tetrahydrofolate + H(+). It participates in nucleotide-sugar biosynthesis; UDP-4-deoxy-4-formamido-beta-L-arabinose biosynthesis; UDP-4-deoxy-4-formamido-beta-L-arabinose from UDP-alpha-D-glucuronate: step 1/3. The protein operates within nucleotide-sugar biosynthesis; UDP-4-deoxy-4-formamido-beta-L-arabinose biosynthesis; UDP-4-deoxy-4-formamido-beta-L-arabinose from UDP-alpha-D-glucuronate: step 3/3. Its pathway is bacterial outer membrane biogenesis; lipopolysaccharide biosynthesis. In terms of biological role, bifunctional enzyme that catalyzes the oxidative decarboxylation of UDP-glucuronic acid (UDP-GlcUA) to UDP-4-keto-arabinose (UDP-Ara4O) and the addition of a formyl group to UDP-4-amino-4-deoxy-L-arabinose (UDP-L-Ara4N) to form UDP-L-4-formamido-arabinose (UDP-L-Ara4FN). The modified arabinose is attached to lipid A and is required for resistance to polymyxin and cationic antimicrobial peptides. The protein is Bifunctional polymyxin resistance protein ArnA of Salmonella paratyphi A (strain ATCC 9150 / SARB42).